Reading from the N-terminus, the 130-residue chain is Phosphomevalonate dehydratase small subunit (130 aa).

Residue Ser62 is the Proton acceptor of the active site.

This sequence belongs to the AcnX type II small subunit family. As to quaternary structure, heterodimer composed of a large subunit (PMDh-L) and a small subunit (PMDh-S).

The catalysed reaction is (R)-5-phosphomevalonate = (2E)-3-methyl-5-phosphooxypent-2-enoate + H2O. It participates in isoprenoid biosynthesis; isopentenyl diphosphate biosynthesis via mevalonate pathway. Functionally, component of a hydro-lyase that catalyzes the dehydration of mevalonate 5-phosphate (MVA5P) to form trans-anhydromevalonate 5-phosphate (tAHMP). Involved in the archaeal mevalonate (MVA) pathway, which provides fundamental precursors for isoprenoid biosynthesis, such as isopentenyl diphosphate (IPP) and dimethylallyl diphosphate (DMAPP). The protein is Phosphomevalonate dehydratase small subunit of Pyrococcus abyssi (strain GE5 / Orsay).